Consider the following 343-residue polypeptide: Protein RecA (343 aa).

An ATP-binding site is contributed by 66–73 (GPESSGKT).

The protein belongs to the RecA family.

It is found in the cytoplasm. Functionally, can catalyze the hydrolysis of ATP in the presence of single-stranded DNA, the ATP-dependent uptake of single-stranded DNA by duplex DNA, and the ATP-dependent hybridization of homologous single-stranded DNAs. It interacts with LexA causing its activation and leading to its autocatalytic cleavage. This Rickettsia canadensis (strain McKiel) protein is Protein RecA.